A 460-amino-acid polypeptide reads, in one-letter code: Nitrilase and fragile histidine triad fusion protein NitFhit (460 aa).

Positions 33–279 (ATIAVGQMRS…LDIGTAEVDL (247 aa)) constitute a CN hydrolase domain. Residues E72, K142, and C183 contribute to the active site. Residues 315 to 422 (DRPFATNIVD…MPRRLGDFGH (108 aa)) enclose the HIT domain. The Histidine triad motif motif lies at 407-411 (HVHFH). H409 serves as the catalytic Tele-AMP-histidine intermediate.

In the N-terminal section; belongs to the UPF0012 family. Homotetramer. Mn(2+) is required as a cofactor.

The catalysed reaction is P(1),P(3)-bis(5'-adenosyl) triphosphate + H2O = AMP + ADP + 2 H(+). Functionally, cleaves A-5'-PPP-5'A to yield AMP and ADP. The protein is Nitrilase and fragile histidine triad fusion protein NitFhit of Drosophila melanogaster (Fruit fly).